Here is a 294-residue protein sequence, read N- to C-terminus: Putative maltodextrin utilization protein YvdJ (294 aa).

4 helical membrane passes run 35 to 55 (LSFL…VSFV), 184 to 204 (MIMM…TFVL), 228 to 248 (IAIC…MVHF), and 249 to 269 (DLIT…SFAF).

The protein localises to the cell membrane. Functionally, could have a role in maltodextrin utilization. This is Putative maltodextrin utilization protein YvdJ (yvdJ) from Bacillus subtilis (strain 168).